The following is a 361-amino-acid chain: Fructose-bisphosphate aldolase (361 aa).

Threonine 2 carries the post-translational modification N-acetylthreonine. Arginine 56 and lysine 147 together coordinate substrate. Glutamate 188 serves as the catalytic Proton acceptor. The active-site Schiff-base intermediate with dihydroxyacetone-P is lysine 230.

This sequence belongs to the class I fructose-bisphosphate aldolase family. Homotetramer. Mainly expressed in the heads and partly in the thoraxes of adult flies. In terms of tissue distribution, expressed in all adult tissues. The Alpha-beta mRNA shows strong expression in the abdomens of adults. As to expression, mainly expressed in adult abdominal regions and is also expressed in lesser amounts in other parts of the body. The Beta-gamma mRNA is expressed in adult heads.

It carries out the reaction beta-D-fructose 1,6-bisphosphate = D-glyceraldehyde 3-phosphate + dihydroxyacetone phosphate. Its pathway is carbohydrate degradation; glycolysis; D-glyceraldehyde 3-phosphate and glycerone phosphate from D-glucose: step 4/4. Its function is as follows. Enzyme of the glycolytic pathway. Glycolysis is essential in glial cells but not in neurons; neurons rely on the citric acid cycle for their energy needs, and on lactate and alanine secreted into the hemolymph by glial cells to fuel it. May take part in developmental stage-specific or tissue -specific sugar-phosphate metabolisms. Protein acts on two substrates fructose 1,6-bisphosphate and fructose 1-phosphate (like other class I aldolases). The sequence is that of Fructose-bisphosphate aldolase from Drosophila melanogaster (Fruit fly).